The primary structure comprises 362 residues: tRNA-specific 2-thiouridylase MnmA (362 aa).

ATP contacts are provided by residues 13 to 20 (GLSGGVDS) and methionine 39. Residues 99-101 (NPD) are interaction with target base in tRNA. Residue cysteine 104 is the Nucleophile of the active site. Residues cysteine 104 and cysteine 200 are joined by a disulfide bond. Position 128 (glycine 128) interacts with ATP. The segment at 150 to 152 (KDQ) is interaction with tRNA. Cysteine 200 (cysteine persulfide intermediate) is an active-site residue.

It belongs to the MnmA/TRMU family.

It localises to the cytoplasm. The enzyme catalyses S-sulfanyl-L-cysteinyl-[protein] + uridine(34) in tRNA + AH2 + ATP = 2-thiouridine(34) in tRNA + L-cysteinyl-[protein] + A + AMP + diphosphate + H(+). In terms of biological role, catalyzes the 2-thiolation of uridine at the wobble position (U34) of tRNA, leading to the formation of s(2)U34. In Coxiella burnetii (strain Dugway 5J108-111), this protein is tRNA-specific 2-thiouridylase MnmA.